The chain runs to 458 residues: Exodeoxyribonuclease 7 large subunit (458 aa).

Belongs to the XseA family. In terms of assembly, heterooligomer composed of large and small subunits.

Its subcellular location is the cytoplasm. The catalysed reaction is Exonucleolytic cleavage in either 5'- to 3'- or 3'- to 5'-direction to yield nucleoside 5'-phosphates.. Its function is as follows. Bidirectionally degrades single-stranded DNA into large acid-insoluble oligonucleotides, which are then degraded further into small acid-soluble oligonucleotides. The sequence is that of Exodeoxyribonuclease 7 large subunit from Yersinia pseudotuberculosis serotype O:1b (strain IP 31758).